Here is a 563-residue protein sequence, read N- to C-terminus: Eukaryotic translation initiation factor 3 subunit D-1 (563 aa).

The tract at residues 98–167 (VQKPPHQRGR…GPPPKMRESS (70 aa)) is disordered. Basic residues predominate over residues 100 to 121 (KPPHQRGRFRNMRNSRSGRGRN). Thr128 bears the Phosphothreonine mark. Residues 291–305 (EFDLLTVNESSVEPP) are RNA gate.

This sequence belongs to the eIF-3 subunit D family. In terms of assembly, component of the eukaryotic translation initiation factor 3 (eIF-3) complex. The eIF-3 complex interacts with pix.

It is found in the cytoplasm. MRNA cap-binding component of the eukaryotic translation initiation factor 3 (eIF-3) complex, which is involved in protein synthesis of a specialized repertoire of mRNAs and, together with other initiation factors, stimulates binding of mRNA and methionyl-tRNAi to the 40S ribosome. The eIF-3 complex specifically targets and initiates translation of a subset of mRNAs involved in cell proliferation. In the eIF-3 complex, eif3d specifically recognizes and binds the 7-methylguanosine cap of a subset of mRNAs. The protein is Eukaryotic translation initiation factor 3 subunit D-1 of Drosophila grimshawi (Hawaiian fruit fly).